The chain runs to 460 residues: Cysteine--tRNA ligase (460 aa).

Cysteine 28 serves as a coordination point for Zn(2+). Positions 30–40 match the 'HIGH' region motif; the sequence is VTIYDLCHIGH. Residues cysteine 209, histidine 234, and glutamate 238 each contribute to the Zn(2+) site. The 'KMSKS' region motif lies at 266 to 270; that stretch reads KMSKS. Lysine 269 is a binding site for ATP.

The protein belongs to the class-I aminoacyl-tRNA synthetase family. Monomer. Requires Zn(2+) as cofactor.

It localises to the cytoplasm. The catalysed reaction is tRNA(Cys) + L-cysteine + ATP = L-cysteinyl-tRNA(Cys) + AMP + diphosphate. The chain is Cysteine--tRNA ligase from Shewanella frigidimarina (strain NCIMB 400).